A 133-amino-acid chain; its full sequence is MVSQDFSRDKRLLTPRHFKAVFDSPTGKVPGKNLLILARENGLDHPRLGLVIGKKSVKLAVQRNRLKRLMRDSFRLNQQMLAGLDIVIVARKGLGEVENPELHQHFGKLWKRLVRSRPSPAVADSAGVDSHNA.

This sequence belongs to the RnpA family. As to quaternary structure, consists of a catalytic RNA component (M1 or rnpB) and a protein subunit.

It catalyses the reaction Endonucleolytic cleavage of RNA, removing 5'-extranucleotides from tRNA precursor.. In terms of biological role, RNaseP catalyzes the removal of the 5'-leader sequence from pre-tRNA to produce the mature 5'-terminus. It can also cleave other RNA substrates such as 4.5S RNA. The protein component plays an auxiliary but essential role in vivo by binding to the 5'-leader sequence and broadening the substrate specificity of the ribozyme. In Pseudomonas entomophila (strain L48), this protein is Ribonuclease P protein component.